We begin with the raw amino-acid sequence, 103 residues long: Histone H4 (103 aa).

Gly residues predominate over residues 1-14 (MTGRGKGGKGLGKG). The tract at residues 1–20 (MTGRGKGGKGLGKGGAKRHR) is disordered. Position 2 is an N-acetylthreonine (T2). K6 is subject to N6-acetyl-N6-methyllysine; alternate. 4 positions are modified to N6-acetyllysine: K6, K9, K13, and K17. Position 13 is an N6-acetyl-N6-methyllysine; alternate (K13). Position 21 is an N6,N6-dimethyllysine (K21). Residue K32 is modified to N6-methyllysine.

It belongs to the histone H4 family. As to quaternary structure, the nucleosome is a histone octamer containing two molecules each of H2A, H2B, H3 and H4 assembled in one H3-H4 heterotetramer and two H2A-H2B heterodimers. The octamer wraps approximately 147 bp of DNA.

Its subcellular location is the nucleus. The protein localises to the chromosome. Core component of nucleosome. Nucleosomes wrap and compact DNA into chromatin, limiting DNA accessibility to the cellular machineries which require DNA as a template. Histones thereby play a central role in transcription regulation, DNA repair, DNA replication and chromosomal stability. DNA accessibility is regulated via a complex set of post-translational modifications of histones, also called histone code, and nucleosome remodeling. Functionally, a mixture of histones H2B and H4 has antimicrobial activity against the Gram-positive bacterium M.luteus. The chain is Histone H4 from Penaeus vannamei (Whiteleg shrimp).